A 253-amino-acid polypeptide reads, in one-letter code: Ribonuclease 3 (253 aa).

The 129-residue stretch at 29–157 (VDELQKTIGH…MLGAVFLDAG (129 aa)) folds into the RNase III domain. E70 contributes to the Mg(2+) binding site. D74 is a catalytic residue. Mg(2+) is bound by residues D143 and E146. E146 is a catalytic residue. In terms of domain architecture, DRBM spans 184 to 253 (DYKSQLQELT…AARAVATLDK (70 aa)).

Belongs to the ribonuclease III family. As to quaternary structure, homodimer. Mg(2+) is required as a cofactor.

It localises to the cytoplasm. The enzyme catalyses Endonucleolytic cleavage to 5'-phosphomonoester.. Digests double-stranded RNA. Involved in the processing of primary rRNA transcript to yield the immediate precursors to the large and small rRNAs (23S and 16S). Processes some mRNAs, and tRNAs when they are encoded in the rRNA operon. Processes pre-crRNA and tracrRNA of type II CRISPR loci if present in the organism. The sequence is that of Ribonuclease 3 from Nitratidesulfovibrio vulgaris (strain ATCC 29579 / DSM 644 / CCUG 34227 / NCIMB 8303 / VKM B-1760 / Hildenborough) (Desulfovibrio vulgaris).